A 1229-amino-acid chain; its full sequence is Phosphorylase b kinase regulatory subunit alpha, liver isoform (1229 aa).

Acidic residues predominate over residues 625–646; it reads DSLLEDDEEQEEEEEDKFEDDY. The segment at 625 to 648 is disordered; sequence DSLLEDDEEQEEEEEDKFEDDYNN. The interval 825–855 is calmodulin-binding; sequence LEELYIQAGACKEWGLIRYISGILRKRVEVL. Residues 1024–1050 form a disordered region; that stretch reads EIKQRCSSPSTPSGILSPVGPGPADGQ. A compositionally biased stretch (polar residues) spans 1028 to 1037; that stretch reads RCSSPSTPSG. The segment at 1052-1092 is calmodulin-binding; that stretch reads HWVERQGQWLRRRRLDGAINRVPVGFYQKVWKILQKCHGLS. Cys1226 carries S-farnesyl cysteine lipidation.

Belongs to the phosphorylase b kinase regulatory chain family. As to quaternary structure, polymer of 16 chains, four each of alpha, beta, gamma, and delta. Alpha and beta are regulatory chains, gamma is the catalytic chain, and delta is calmodulin. Although the final Cys may be farnesylated, the terminal tripeptide is probably not removed, and the C-terminus is not methylated.

Its subcellular location is the cell membrane. It participates in glycan biosynthesis; glycogen metabolism. With respect to regulation, by phosphorylation of various serine residues and by calcium. Its function is as follows. Phosphorylase b kinase catalyzes the phosphorylation of serine in certain substrates, including troponin I. The alpha chain may bind calmodulin. This chain is Phosphorylase b kinase regulatory subunit alpha, liver isoform (phka2), found in Takifugu rubripes (Japanese pufferfish).